A 1064-amino-acid polypeptide reads, in one-letter code: Carbamoyl phosphate synthase large chain (1064 aa).

Positions 1–401 are carboxyphosphate synthetic domain; it reads MPKRNDIKKI…SLLKAVRSLE (401 aa). ATP is bound by residues Arg129, Arg169, Gly175, Gly176, Glu208, Ile210, Glu215, Gly241, Val242, His243, Gln284, and Glu298. Positions 133-327 constitute an ATP-grasp 1 domain; sequence KELCESINEP…IAKMSAKIAI (195 aa). Mg(2+) contacts are provided by Gln284, Glu298, and Asn300. 3 residues coordinate Mn(2+): Gln284, Glu298, and Asn300. The tract at residues 402–546 is oligomerization domain; the sequence is IGVFHNEMTE…YSTYEWENES (145 aa). Residues 547 to 929 are carbamoyl phosphate synthetic domain; the sequence is KRSDKEKIIV…ALYKSFEAAK (383 aa). The region spanning 671–861 is the ATP-grasp 2 domain; that stretch reads EKALQDLDIP…MAQLATQMIL (191 aa). Residues Arg707, Ser746, Leu748, Glu752, Gly777, Val778, His779, Ser780, Gln820, and Glu832 each coordinate ATP. 3 residues coordinate Mg(2+): Gln820, Glu832, and Asn834. Mn(2+) is bound by residues Gln820, Glu832, and Asn834. Residues 930–1064 enclose the MGS-like domain; sequence LHMADYGSVL…QSRSFTTKNI (135 aa). The allosteric domain stretch occupies residues 930–1064; that stretch reads LHMADYGSVL…QSRSFTTKNI (135 aa).

The protein belongs to the CarB family. As to quaternary structure, composed of two chains; the small (or glutamine) chain promotes the hydrolysis of glutamine to ammonia, which is used by the large (or ammonia) chain to synthesize carbamoyl phosphate. Tetramer of heterodimers (alpha,beta)4. Requires Mg(2+) as cofactor. Mn(2+) serves as cofactor.

The enzyme catalyses hydrogencarbonate + L-glutamine + 2 ATP + H2O = carbamoyl phosphate + L-glutamate + 2 ADP + phosphate + 2 H(+). It carries out the reaction hydrogencarbonate + NH4(+) + 2 ATP = carbamoyl phosphate + 2 ADP + phosphate + 2 H(+). It participates in amino-acid biosynthesis; L-arginine biosynthesis; carbamoyl phosphate from bicarbonate: step 1/1. It functions in the pathway pyrimidine metabolism; UMP biosynthesis via de novo pathway; (S)-dihydroorotate from bicarbonate: step 1/3. Large subunit of the glutamine-dependent carbamoyl phosphate synthetase (CPSase). CPSase catalyzes the formation of carbamoyl phosphate from the ammonia moiety of glutamine, carbonate, and phosphate donated by ATP, constituting the first step of 2 biosynthetic pathways, one leading to arginine and/or urea and the other to pyrimidine nucleotides. The large subunit (synthetase) binds the substrates ammonia (free or transferred from glutamine from the small subunit), hydrogencarbonate and ATP and carries out an ATP-coupled ligase reaction, activating hydrogencarbonate by forming carboxy phosphate which reacts with ammonia to form carbamoyl phosphate. This Lactococcus lactis subsp. cremoris (strain MG1363) protein is Carbamoyl phosphate synthase large chain.